Reading from the N-terminus, the 400-residue chain is Argininosuccinate synthase (400 aa).

ATP is bound at residue 8-16; that stretch reads AYSGGLDTS. L-citrulline contacts are provided by Y86 and S91. G116 contributes to the ATP binding site. L-aspartate is bound by residues T118, N122, and D123. Position 122 (N122) interacts with L-citrulline. Positions 126, 175, 184, 260, and 272 each coordinate L-citrulline.

It belongs to the argininosuccinate synthase family. Type 1 subfamily. As to quaternary structure, homotetramer.

It localises to the cytoplasm. The catalysed reaction is L-citrulline + L-aspartate + ATP = 2-(N(omega)-L-arginino)succinate + AMP + diphosphate + H(+). It participates in amino-acid biosynthesis; L-arginine biosynthesis; L-arginine from L-ornithine and carbamoyl phosphate: step 2/3. The chain is Argininosuccinate synthase from Clostridium acetobutylicum (strain ATCC 824 / DSM 792 / JCM 1419 / IAM 19013 / LMG 5710 / NBRC 13948 / NRRL B-527 / VKM B-1787 / 2291 / W).